We begin with the raw amino-acid sequence, 359 residues long: UPF0283 membrane protein R01807 (359 aa).

2 consecutive transmembrane segments (helical) span residues 76-96 and 109-129; these read FGKIAAGAFGILISLAVGLWI and WLGYGAVAVVAIGVIAFLIVV.

This sequence belongs to the UPF0283 family.

It localises to the cell inner membrane. This is UPF0283 membrane protein R01807 from Rhizobium meliloti (strain 1021) (Ensifer meliloti).